Here is a 120-residue protein sequence, read N- to C-terminus: Small cysteine and glycine repeat-containing protein 2 (120 aa).

The interval 4-104 (CGCGGCGGCG…TCHSCGCGCG (101 aa)) is 19 X 2 AA repeats of CG.

This sequence belongs to the KRTAP type 28 family.

In terms of biological role, in the hair cortex, hair keratin intermediate filaments are embedded in an interfilamentous matrix, consisting of hair keratin-associated proteins (KRTAP), which are essential for the formation of a rigid and resistant hair shaft through their extensive disulfide bond cross-linking with abundant cysteine residues of hair keratins. The matrix proteins include the high-sulfur and high-glycine-tyrosine keratins. This Homo sapiens (Human) protein is Small cysteine and glycine repeat-containing protein 2.